Reading from the N-terminus, the 325-residue chain is tRNA pseudouridine synthase B (325 aa).

Asp-49 functions as the Nucleophile in the catalytic mechanism.

It belongs to the pseudouridine synthase TruB family. Type 1 subfamily.

The enzyme catalyses uridine(55) in tRNA = pseudouridine(55) in tRNA. Responsible for synthesis of pseudouridine from uracil-55 in the psi GC loop of transfer RNAs. The polypeptide is tRNA pseudouridine synthase B (Mesorhizobium japonicum (strain LMG 29417 / CECT 9101 / MAFF 303099) (Mesorhizobium loti (strain MAFF 303099))).